Consider the following 623-residue polypeptide: Pentatricopeptide repeat-containing protein At5g15340, mitochondrial (623 aa).

Residues 1-16 (MKCLSYQKVRLLLRHC) constitute a mitochondrion transit peptide. PPR repeat units follow at residues 42–72 (RSYL…IPLS), 75–109 (DNVD…RVEI), 110–144 (DDVS…GVLT), 145–179 (SVKV…SVVS), 180–206 (WTVV…MPER), 207–237 (NAVA…MVFR), 243–277 (NFVT…EMMM), 285–319 (DVMV…NVVT), 320–346 (WNAL…MIRE), 350–384 (DDLT…GLEP), and 385–419 (KVDH…PNEV). Positions 420 to 495 (VLGSLLGSCS…IPGLSSIYVN (76 aa)) are type E motif. Positions 496 to 526 (DSVHRFSSGDRSHPRTKEIYLKLNEVIERIR) are type E(+) motif. The segment at 527-623 (SAGYVPDVSG…GGSCSCSDYW (97 aa)) is type DYW motif.

Belongs to the PPR family. PCMP-H subfamily.

It localises to the mitochondrion. This is Pentatricopeptide repeat-containing protein At5g15340, mitochondrial (PCMP-H91) from Arabidopsis thaliana (Mouse-ear cress).